We begin with the raw amino-acid sequence, 695 residues long: A-kinase anchor protein 17A (695 aa).

Residues 83-112 (VENKSLVKSFLACLDGKTIKLSGFSDILKV) form a PKA-RI and PKA-RII subunit binding domain region. A Glycyl lysine isopeptide (Lys-Gly) (interchain with G-Cter in SUMO1); alternate cross-link involves residue lysine 118. Lysine 118 participates in a covalent cross-link: Glycyl lysine isopeptide (Lys-Gly) (interchain with G-Cter in SUMO2); alternate. Residues 147–256 (DTIHLEGLPC…KAVACNIKVS (110 aa)) form the RRM domain. The segment at 279 to 337 (QELEQQREEQKRREKEAEERQRAEERKQKELEELERERKREEKLRKREQKQRDRELRRN) is disordered. The segment at 425–454 (LGLQRKERELRERLLSILLSKKPDDSHTHD) is PKA-RI-alpha subunit binding domain. The disordered stretch occupies residues 482–695 (TTLHPLGGQP…PSRHRSTWNR (214 aa)). Serine 537 is modified (phosphoserine). Over residues 567-585 (VSRKDTRSEQDKCNREPSK) the composition is skewed to basic and acidic residues. 2 stretches are compositionally biased toward basic residues: residues 598–609 (RHKRERSRARRA) and 618–628 (RKERRPHKKHA). Residues 629 to 644 (YKDDSPRRRSTSPDHT) show a composition bias toward basic and acidic residues. A Phosphoserine modification is found at serine 633. 2 stretches are compositionally biased toward basic residues: residues 645 to 658 (RSRR…HRRE) and 666 to 695 (SASR…TWNR).

In terms of assembly, monomer. Component of the spliceosome. Interacts with ZRANB2 and SFRS1/ASF through its Arg/Ser-rich domain. Interacts with RI and RII subunits of PKA. In terms of tissue distribution, widely expressed. Found in heart, brain, lung, liver, skeletal muscle, kidney and pancreas. Expressed in activated B-cells and placenta. Expressed in all cell lines tested including Jurkat-TAg, U-937 and HEK293 cells.

It is found in the nucleus speckle. Its function is as follows. Splice factor regulating alternative splice site selection for certain mRNA precursors. Mediates regulation of pre-mRNA splicing in a PKA-dependent manner. This chain is A-kinase anchor protein 17A (AKAP17A), found in Homo sapiens (Human).